The primary structure comprises 86 residues: Omega-theraphotoxin-Hhn1d (86 aa).

Residues 1–21 (MKSIVFVALFGLALLAVVCSA) form the signal peptide. Positions 22–50 (SEDAHKELLKEVVRAMVVDKTDAVQAEER) are excised as a propeptide. 3 cysteine pairs are disulfide-bonded: C52–C66, C59–C71, and C65–C78.

The protein belongs to the neurotoxin 10 (Hwtx-1) family. 17 (Hntx-9) subfamily. As to expression, expressed by the venom gland.

Its subcellular location is the secreted. Ion channel inhibitor. The protein is Omega-theraphotoxin-Hhn1d of Cyriopagopus hainanus (Chinese bird spider).